The following is a 440-amino-acid chain: MDPPCSLSASFEGSFAYLTVRDRLPQILTKVIDTVHRNKHKFFEDHGEEGVEAEKRALSFFSKLRNEMQTNKPVLPLTDNQLDTELWNQYLDYQKSLLNEGETPSWFKSPWLYVECYMYRRIQEGIVLSPPISKYDVFREGKIESFFQSQPAIIALCTYLQELKKNMAALSENQKQEELYKLLQVCLWGNKCDLSISGGLDNSQKFSILSSLESFRPFILVNDMESVLSVLLESKNPESGKELMKRVDIVLDNAGFELITDFVLADALLSFRLASEVHFHGKCMPWFVSDTTKHDFNWTIKQLQAANHKWMSKCGGNWKENLKKSHWIYHEHPFWTLPHEFCMMAQTAPDLYSELQKSDLVIFKGDLNYRKLTGDRKWDFTVPFSEALTTFHPAPLCSIRTLKADVQVGLKAGIGEQLFSTEPDWMISGKYGVVQLSTSV.

The Mn(2+) site is built by aspartate 252 and asparagine 253. 252 to 253 (DN) serves as a coordination point for substrate. S-adenosyl-L-methionine contacts are provided by glutamate 257 and aspartate 290. Residue aspartate 290 coordinates Mn(2+). Substrate-binding positions include 366-370 (DLNYR) and lysine 403. Positions 400–403 (RTLK) match the Subfamily III RTxK motif motif.

The protein belongs to the damage-control phosphatase family. Sugar phosphate phosphatase III subfamily. Mn(2+) is required as a cofactor. Ni(2+) serves as cofactor. Post-translationally, automethylated.

The catalysed reaction is beta-D-fructose 1-phosphate + H2O = D-fructose + phosphate. It catalyses the reaction beta-D-fructose 6-phosphate = dihydroxyacetone + D-glyceraldehyde 3-phosphate. The enzyme catalyses L-glutamyl-[protein] + S-adenosyl-L-methionine = [protein]-L-glutamate 5-O-methyl ester + S-adenosyl-L-homocysteine. Its function is as follows. Metal-dependent phosphatase that shows phosphatase activity against several substrates, including fructose-1-phosphate and fructose-6-phosphate. Its preference for fructose-1-phosphate, a strong glycating agent that causes DNA damage rather than a canonical yeast metabolite, suggests a damage-control function in hexose phosphate metabolism. Has also been shown to have O-methyltransferase activity that methylates glutamate residues of target proteins to form gamma-glutamyl methyl ester residues. Possibly methylates PCNA, suggesting it is involved in the DNA damage response. The chain is Damage-control phosphatase ARMT1 from Xenopus laevis (African clawed frog).